We begin with the raw amino-acid sequence, 148 residues long: Ribonuclease P protein component (148 aa).

A disordered region spans residues 119-148; sequence PLPAAPGTMPPARAPRPSSLSPTEPDPRSD.

It belongs to the RnpA family. Consists of a catalytic RNA component (M1 or rnpB) and a protein subunit.

It carries out the reaction Endonucleolytic cleavage of RNA, removing 5'-extranucleotides from tRNA precursor.. Functionally, RNaseP catalyzes the removal of the 5'-leader sequence from pre-tRNA to produce the mature 5'-terminus. It can also cleave other RNA substrates such as 4.5S RNA. The protein component plays an auxiliary but essential role in vivo by binding to the 5'-leader sequence and broadening the substrate specificity of the ribozyme. This Xanthomonas campestris pv. campestris (strain 8004) protein is Ribonuclease P protein component.